Here is a 209-residue protein sequence, read N- to C-terminus: Large ribosomal subunit protein bL25 (209 aa).

Positions 190-209 (GLKSADDEAEGEDAEEAAAE) are disordered. The span at 196–209 (DEAEGEDAEEAAAE) shows a compositional bias: acidic residues.

The protein belongs to the bacterial ribosomal protein bL25 family. CTC subfamily. As to quaternary structure, part of the 50S ribosomal subunit; part of the 5S rRNA/L5/L18/L25 subcomplex. Contacts the 5S rRNA. Binds to the 5S rRNA independently of L5 and L18.

In terms of biological role, this is one of the proteins that binds to the 5S RNA in the ribosome where it forms part of the central protuberance. This chain is Large ribosomal subunit protein bL25, found in Ruegeria sp. (strain TM1040) (Silicibacter sp.).